A 465-amino-acid chain; its full sequence is Argininosuccinate lyase (465 aa).

It belongs to the lyase 1 family. Argininosuccinate lyase subfamily.

The protein localises to the cytoplasm. It catalyses the reaction 2-(N(omega)-L-arginino)succinate = fumarate + L-arginine. Its pathway is amino-acid biosynthesis; L-arginine biosynthesis; L-arginine from L-ornithine and carbamoyl phosphate: step 3/3. This Bradyrhizobium diazoefficiens (strain JCM 10833 / BCRC 13528 / IAM 13628 / NBRC 14792 / USDA 110) protein is Argininosuccinate lyase.